The sequence spans 125 residues: MGVMWGLISVAIASLAQLSLGFAMMRLPSIAHPLAFISGLGAFNAATLALFAGLAGYLVSVFCWQKTLHTLALSKAYALLSLSYVLVWVASMLLPGLQGAFSLKAMLGVLCIMAGVMLIFLPARS.

At 1–2 the chain is on the cytoplasmic side; the sequence is MG. Residues 3 to 23 form a helical membrane-spanning segment; the sequence is VMWGLISVAIASLAQLSLGFA. Over 24 to 33 the chain is Periplasmic; it reads MMRLPSIAHP. Residues 34 to 54 traverse the membrane as a helical segment; it reads LAFISGLGAFNAATLALFAGL. Over 55-76 the chain is Cytoplasmic; it reads AGYLVSVFCWQKTLHTLALSKA. A helical transmembrane segment spans residues 77–97; sequence YALLSLSYVLVWVASMLLPGL. Residues 98-100 are Periplasmic-facing; that stretch reads QGA. Residues 101–121 traverse the membrane as a helical segment; the sequence is FSLKAMLGVLCIMAGVMLIFL. Topologically, residues 122–125 are cytoplasmic; the sequence is PARS.

The protein belongs to the ArnF family. As to quaternary structure, heterodimer of ArnE and ArnF.

It is found in the cell inner membrane. It functions in the pathway bacterial outer membrane biogenesis; lipopolysaccharide biosynthesis. Functionally, translocates 4-amino-4-deoxy-L-arabinose-phosphoundecaprenol (alpha-L-Ara4N-phosphoundecaprenol) from the cytoplasmic to the periplasmic side of the inner membrane. This is Probable 4-amino-4-deoxy-L-arabinose-phosphoundecaprenol flippase subunit ArnF from Salmonella choleraesuis (strain SC-B67).